Reading from the N-terminus, the 67-residue chain is MPQLDTSTWFITITSMTITLFIMFQLKLSKHSYPSNPELKPINTSMHTTPWESKWTKIYSPLSLPQQ.

Residues 8 to 24 (TWFITITSMTITLFIMF) form a helical membrane-spanning segment. The residue at position 54 (Lys-54) is an N6-acetyllysine; alternate. N6-succinyllysine; alternate is present on Lys-54. Position 57 is an N6-acetyllysine (Lys-57).

This sequence belongs to the ATPase protein 8 family. F-type ATPases have 2 components, CF(1) - the catalytic core - and CF(0) - the membrane proton channel. Component of an ATP synthase complex composed of ATP5PB, ATP5MC1, ATP5F1E, ATP5PD, ATP5ME, ATP5PF, ATP5MF, MT-ATP6, MT-ATP8, ATP5F1A, ATP5F1B, ATP5F1D, ATP5F1C, ATP5PO, ATP5MG, ATP5MK and ATP5MJ. Interacts with PRICKLE3.

Its subcellular location is the mitochondrion membrane. Functionally, mitochondrial membrane ATP synthase (F(1)F(0) ATP synthase or Complex V) produces ATP from ADP in the presence of a proton gradient across the membrane which is generated by electron transport complexes of the respiratory chain. F-type ATPases consist of two structural domains, F(1) - containing the extramembraneous catalytic core and F(0) - containing the membrane proton channel, linked together by a central stalk and a peripheral stalk. During catalysis, ATP synthesis in the catalytic domain of F(1) is coupled via a rotary mechanism of the central stalk subunits to proton translocation. Part of the complex F(0) domain. Minor subunit located with subunit a in the membrane. This is ATP synthase protein 8 (MT-ATP8) from Rhinoceros unicornis (Greater Indian rhinoceros).